A 991-amino-acid polypeptide reads, in one-letter code: Ribonuclease TUDOR 1 (991 aa).

At A2 the chain carries N-acetylalanine. 4 consecutive TNase-like domains span residues 8-151, 186-364, 378-557, and 587-714; these read QWLK…RWSK, KPME…MWAN, QNFT…IHSA, and RRIP…IWEN. Residues 227–250 are disordered; it reads RTTNGSVVETVPDEPNGDVSAESR. The 66-residue stretch at 782–847 folds into the Tudor domain; that stretch reads NPKRGDIVLA…RPIDPSVSAA (66 aa). Residue Y970 is modified to Phosphotyrosine. The tract at residues 971 to 991 is disordered; it reads GDIESDDEDTGPARKPAGGRR. S975 carries the post-translational modification Phosphoserine. The residue at position 980 (T980) is a Phosphothreonine.

In terms of tissue distribution, expressed in seeds, leaves, flowers, roots and siliques (at protein level). Accumulates in the cap and elongation zone of the root apices (at protein level).

The protein localises to the cytoplasm. Its subcellular location is the cytoplasmic granule. The protein resides in the perinuclear region. It localises to the endoplasmic reticulum. Repressed by the specific inhibitor 3',5'-deoxythymidine bisphosphate (pdTp); this RNase activity inhibition impairs subcellular relocation upon abiotic stress and leads to reduced stress resistance. Functionally, cytoprotective ribonuclease (RNase) required for resistance to abiotic stresses, acting as a positive regulator of mRNA decapping during stress. Essential for the integrity and function of cytoplasmic messenger ribonucleoprotein (mRNP) complexes called stress granules (SGs) and processing bodies (PBs), sites of post-transcriptional gene regulation during stress (e.g. salt and heat). Involved in gibberellic acid (GA) biosynthesis. Essential for stress tolerance, probably by regulating mRNAs entering the secretory pathway. Component of stress granules (SGs) that regulates growth under salt stress by modulating levels of GA20OX3 mRNA. Binds GA20OX3 mRNA. May inhibit the degradation of mRNAs involved in stress adaptation. The sequence is that of Ribonuclease TUDOR 1 from Arabidopsis thaliana (Mouse-ear cress).